The sequence spans 613 residues: tRNA 5-methylaminomethyl-2-thiouridine biosynthesis bifunctional protein MnmC (613 aa).

Positions 1-225 (MKKAKLIFKD…KREMIKAYLE (225 aa)) are tRNA (mnm(5)s(2)U34)-methyltransferase. The tract at residues 252 to 613 (IGAGISSAVL…FLVRKLKKGL (362 aa)) is FAD-dependent cmnm(5)s(2)U34 oxidoreductase.

In the N-terminal section; belongs to the methyltransferase superfamily. tRNA (mnm(5)s(2)U34)-methyltransferase family. The protein in the C-terminal section; belongs to the DAO family. It depends on FAD as a cofactor.

Its subcellular location is the cytoplasm. The enzyme catalyses 5-aminomethyl-2-thiouridine(34) in tRNA + S-adenosyl-L-methionine = 5-methylaminomethyl-2-thiouridine(34) in tRNA + S-adenosyl-L-homocysteine + H(+). Functionally, catalyzes the last two steps in the biosynthesis of 5-methylaminomethyl-2-thiouridine (mnm(5)s(2)U) at the wobble position (U34) in tRNA. Catalyzes the FAD-dependent demodification of cmnm(5)s(2)U34 to nm(5)s(2)U34, followed by the transfer of a methyl group from S-adenosyl-L-methionine to nm(5)s(2)U34, to form mnm(5)s(2)U34. The polypeptide is tRNA 5-methylaminomethyl-2-thiouridine biosynthesis bifunctional protein MnmC (Campylobacter jejuni subsp. doylei (strain ATCC BAA-1458 / RM4099 / 269.97)).